We begin with the raw amino-acid sequence, 102 residues long: Large ribosomal subunit protein bL21 (102 aa).

Belongs to the bacterial ribosomal protein bL21 family. In terms of assembly, part of the 50S ribosomal subunit. Contacts protein L20.

Functionally, this protein binds to 23S rRNA in the presence of protein L20. In Limosilactobacillus fermentum (strain NBRC 3956 / LMG 18251) (Lactobacillus fermentum), this protein is Large ribosomal subunit protein bL21.